The primary structure comprises 241 residues: Uracil-DNA glycosylase (241 aa).

D71 (proton acceptor) is an active-site residue. A disordered region spans residues 221-241 (ISPIDWSLPPRNELDTTSAGA).

It belongs to the uracil-DNA glycosylase (UDG) superfamily. UNG family.

It is found in the cytoplasm. It catalyses the reaction Hydrolyzes single-stranded DNA or mismatched double-stranded DNA and polynucleotides, releasing free uracil.. Functionally, excises uracil residues from the DNA which can arise as a result of misincorporation of dUMP residues by DNA polymerase or due to deamination of cytosine. This is Uracil-DNA glycosylase from Xanthomonas oryzae pv. oryzae (strain MAFF 311018).